Here is a 227-residue protein sequence, read N- to C-terminus: Small ribosomal subunit protein uS3 (227 aa).

Positions 39-109 constitute a KH type-2 domain; the sequence is IHRFFEKLTR…KIVINVDAVD (71 aa).

Belongs to the universal ribosomal protein uS3 family. As to quaternary structure, part of the 30S ribosomal subunit. Forms a tight complex with proteins S10 and S14.

Functionally, binds the lower part of the 30S subunit head. Binds mRNA in the 70S ribosome, positioning it for translation. The chain is Small ribosomal subunit protein uS3 from Mesomycoplasma hyopneumoniae (strain 232) (Mycoplasma hyopneumoniae).